A 463-amino-acid chain; its full sequence is Sodium-coupled neutral amino acid transporter 7 (463 aa).

Position 28 is a phosphoserine (serine 28). Transmembrane regions (helical) follow at residues alanine 56–phenylalanine 76, valine 82–isoleucine 102, leucine 130–isoleucine 150, phenylalanine 179–glycine 199, phenylalanine 206–proline 226, alanine 240–valine 260, alanine 283–phenylalanine 303, methionine 320–leucine 340, valine 372–isoleucine 392, isoleucine 396–isoleucine 416, and alanine 429–phenylalanine 449.

The protein belongs to the amino acid/polyamine transporter 2 family. As to quaternary structure, interacts with the mTORC1 complex; this interaction mediates the recruitment of mTORC1 to the lysosome and its subsequent activation.

The protein localises to the lysosome membrane. It localises to the cell projection. The protein resides in the axon. The enzyme catalyses L-asparagine(in) + Na(+)(in) = L-asparagine(out) + Na(+)(out). It catalyses the reaction L-glutamine(in) + Na(+)(in) = L-glutamine(out) + Na(+)(out). Functionally, symporter that selectively cotransports sodium ions and amino acids, such as L-glutamine and L-asparagine from the lysosome into the cytoplasm and may participates in mTORC1 activation. The transport activity requires an acidic lysosomal lumen. This Bos taurus (Bovine) protein is Sodium-coupled neutral amino acid transporter 7.